We begin with the raw amino-acid sequence, 369 residues long: Phospho-N-acetylmuramoyl-pentapeptide-transferase (369 aa).

10 consecutive transmembrane segments (helical) span residues 2–22, 55–75, 86–106, 120–140, 163–183, 196–216, 239–259, 266–286, 291–311, and 348–368; these read IALL…TPLF, TVVV…MWMM, GLLL…DDFI, AKLI…LQFP, LAFG…NLII, LDGL…IMGI, PMDL…FLWW, IFMG…FAIL, LLLA…IIQV, and ILAG…WVVL.

The protein belongs to the glycosyltransferase 4 family. MraY subfamily. It depends on Mg(2+) as a cofactor.

It is found in the cell membrane. It catalyses the reaction UDP-N-acetyl-alpha-D-muramoyl-L-alanyl-gamma-D-glutamyl-meso-2,6-diaminopimeloyl-D-alanyl-D-alanine + di-trans,octa-cis-undecaprenyl phosphate = di-trans,octa-cis-undecaprenyl diphospho-N-acetyl-alpha-D-muramoyl-L-alanyl-D-glutamyl-meso-2,6-diaminopimeloyl-D-alanyl-D-alanine + UMP. It functions in the pathway cell wall biogenesis; peptidoglycan biosynthesis. Functionally, catalyzes the initial step of the lipid cycle reactions in the biosynthesis of the cell wall peptidoglycan: transfers peptidoglycan precursor phospho-MurNAc-pentapeptide from UDP-MurNAc-pentapeptide onto the lipid carrier undecaprenyl phosphate, yielding undecaprenyl-pyrophosphoryl-MurNAc-pentapeptide, known as lipid I. In Paenarthrobacter aurescens (strain TC1), this protein is Phospho-N-acetylmuramoyl-pentapeptide-transferase.